We begin with the raw amino-acid sequence, 115 residues long: Large ribosomal subunit protein bL19 (115 aa).

The protein belongs to the bacterial ribosomal protein bL19 family.

Functionally, this protein is located at the 30S-50S ribosomal subunit interface and may play a role in the structure and function of the aminoacyl-tRNA binding site. The sequence is that of Large ribosomal subunit protein bL19 from Desulfovibrio desulfuricans (strain ATCC 27774 / DSM 6949 / MB).